The primary structure comprises 299 residues: Putative activator of 90 kDa heat shock protein ATPase homolog 2 (299 aa).

It belongs to the AHA1 family.

Functionally, co-chaperone that stimulates HSP90 ATPase activity. The protein is Putative activator of 90 kDa heat shock protein ATPase homolog 2 of Homo sapiens (Human).